We begin with the raw amino-acid sequence, 170 residues long: Adenine phosphoribosyltransferase (170 aa).

Belongs to the purine/pyrimidine phosphoribosyltransferase family. As to quaternary structure, homodimer.

Its subcellular location is the cytoplasm. It catalyses the reaction AMP + diphosphate = 5-phospho-alpha-D-ribose 1-diphosphate + adenine. It participates in purine metabolism; AMP biosynthesis via salvage pathway; AMP from adenine: step 1/1. Functionally, catalyzes a salvage reaction resulting in the formation of AMP, that is energically less costly than de novo synthesis. The chain is Adenine phosphoribosyltransferase from Alkaliphilus metalliredigens (strain QYMF).